The sequence spans 301 residues: Cuticle collagen 1 (301 aa).

An N-terminal signal peptide occupies residues 1-37 (METDGRLKAYKFVAYAAVGFSIAAVASVLLTLPMVYS). A furin-like endopeptidase recognition region region spans residues 79 to 82 (RTTR). 4 triple-helical region regions span residues 105–134 (GPPGPAGAPGKPGKPGRPGAPGTPGTPGKP), 153–179 (GPPGPPGPPGAPGDPGEAGTPGRPGTD), 183–209 (GSPGPRGPPGPAGEAGAPGPAGEPGTP), and 218–283 (GAPG…KGIC). Residues 109–284 (PAGAPGKPGK…GTPGEKGICP (176 aa)) form a disordered region. Pro residues-rich tracts occupy residues 131–164 (PGKPPVAPCEPTTPPPCKPCPQGPPGPPGPPGAP) and 184–193 (SPGPRGPPGP). Residues 194–210 (AGEAGAPGPAGEPGTPA) are compositionally biased toward low complexity. Positions 226–258 (SGPPGPPGPPGAPGNDGPPGPPGPKGAPGPDGP) are enriched in pro residues.

Belongs to the cuticular collagen family. Collagen polypeptide chains are complexed within the cuticle by disulfide bonds and other types of covalent cross-links.

The protein resides in the secreted. It is found in the extracellular space. Its function is as follows. Secreted collagen that forms part of the nematode cuticle, which functions as an exoskeleton and a barrier to protect the worm from its environment. Secretion and subsequent incorporation into the cuticle is likely mediated by bli-4, which probably cleaves at the N-terminal consensus furin cleavage site. The protein is Cuticle collagen 1 (sqt-3) of Caenorhabditis elegans.